A 124-amino-acid polypeptide reads, in one-letter code: Large ribosomal subunit protein bL19 (124 aa).

The protein belongs to the bacterial ribosomal protein bL19 family.

Its function is as follows. This protein is located at the 30S-50S ribosomal subunit interface and may play a role in the structure and function of the aminoacyl-tRNA binding site. The sequence is that of Large ribosomal subunit protein bL19 from Dinoroseobacter shibae (strain DSM 16493 / NCIMB 14021 / DFL 12).